The sequence spans 146 residues: VEWTDFERATINDIFSKLEYEVVGPATLARCLVVYPWTQRYFGNFGNLYNAAAIAENPMVSKHGITILHGLDRAVKNMDDIKNTYAELSVLHSEKLHVDPDNFQLLADCLTIVVAARFGNTFTGEVQAAFQKFLSVVVSSLGRQYH.

One can recognise a Globin domain in the interval 2-146 (EWTDFERATI…VVSSLGRQYH (145 aa)). His-63 and His-92 together coordinate heme b.

This sequence belongs to the globin family. Hb 2 is a heterotetramer of two alpha-2 and two beta-2 chains. As to expression, red blood cells.

In terms of biological role, involved in oxygen transport from gills to the various peripheral tissues. The polypeptide is Hemoglobin subunit beta-2 (hbb2) (Gobionotothen gibberifrons (Humped rockcod)).